The chain runs to 339 residues: Transposase for insertion sequence element IS1086 (339 aa).

Residues 176 to 329 (DRLMPGHWEG…SPLQVLAQVL (154 aa)) enclose the Integrase catalytic domain.

The protein belongs to the transposase IS30 family.

Required for the transposition of the insertion element. The sequence is that of Transposase for insertion sequence element IS1086 (IS1086) from Cupriavidus metallidurans (strain ATCC 43123 / DSM 2839 / NBRC 102507 / CH34) (Ralstonia metallidurans).